The chain runs to 297 residues: tRNA pseudouridine synthase B (297 aa).

Aspartate 44 serves as the catalytic Nucleophile.

Belongs to the pseudouridine synthase TruB family. Type 1 subfamily.

The enzyme catalyses uridine(55) in tRNA = pseudouridine(55) in tRNA. Responsible for synthesis of pseudouridine from uracil-55 in the psi GC loop of transfer RNAs. This is tRNA pseudouridine synthase B from Mycobacterium sp. (strain JLS).